Consider the following 178-residue polypeptide: Caveolin-1 (178 aa).

At serine 2 the chain carries N-acetylserine. A Phosphoserine modification is found at serine 2. The interval 2-94 is required for homooligomerization; the sequence is SGGKYVDSEG…WKASFTTFTV (93 aa). Residues 2-104 are Cytoplasmic-facing; the sequence is SGGKYVDSEG…TKYWFYRLLS (103 aa). N6-acetyllysine; alternate is present on lysine 5. A Glycyl lysine isopeptide (Lys-Gly) (interchain with G-Cter in ubiquitin); alternate cross-link involves residue lysine 5. Tyrosine 6 is subject to Phosphotyrosine. Serine 9 carries the phosphoserine modification. Tyrosine 14 is modified (phosphotyrosine; by ABL1). Tyrosine 25 is modified (phosphotyrosine). Residues lysine 26, lysine 30, lysine 39, lysine 47, and lysine 57 each participate in a glycyl lysine isopeptide (Lys-Gly) (interchain with G-Cter in ubiquitin) cross-link. Positions 82-94 are interaction with CAVIN3; sequence DGIWKASFTTFTV. The helical intramembrane region spans 105 to 125; sequence AVFGIPMALIWGIYFAIVSFL. At 126–178 the chain is on the cytoplasmic side; the sequence is HIWVVVPYIKSFLIEIQCISRVYSIYIHTFCDPLFEAFGKVFSNIRINTQKEI. An interacts with SPRY1, SPRY2, SPRY3 and SPRY4 region spans residues 131-142; it reads VPYIKSFLIEIQ. Residues cysteine 143 and cysteine 156 are each lipidated (S-palmitoyl cysteine). The tract at residues 149 to 160 is interacts with SPRY1, SPRY2, and SPRY4; that stretch reads SIYIHTFCDPLF. Residues 167 to 178 form an interacts with SPRY1, SPRY2, SPRY3 and SPRY4 region; that stretch reads FSNIRINTQKEI.

Belongs to the caveolin family. As to quaternary structure, homooligomer. Interacts (via the N-terminus) with DPP4; the interaction is direct. Forms a stable heterooligomeric complex with CAV2 that targets to lipid rafts and drives caveolae formation. Interacts with PACSIN2; this interaction induces membrane tubulation. Interacts with BMX, BTK, CTNNB1, CDH1, GLIPR2, JUP, NOSTRIN, SNAP25 and STX1A. Interacts with SLC7A9. Interacts with TGFBR1. Interacts with CAVIN3 (via leucine-zipper domain) in a cholesterol-sensitive manner. Interacts with CAVIN1. Interacts with EHD2 in a cholesterol-dependent manner. Forms a ternary complex with UBXN6 and VCP; mediates CAV1 targeting to lysosomes for degradation. Interacts with ABCG1; this interaction regulates ABCG1-mediated cholesterol efflux. Interacts with NEU3; this interaction enhances NEU3 sialidase activity within caveola. Interacts (via C-terminus) with SPRY1, SPRY2 (via C-terminus), SPRY3, and SPRY4. In terms of processing, phosphorylated at Tyr-14 by ABL1 in response to oxidative stress. Post-translationally, ubiquitinated. Undergo monoubiquitination and multi- and/or polyubiquitination. Monoubiquitination of N-terminal lysines promotes integration in a ternary complex with UBXN6 and VCP which promotes oligomeric CAV1 targeting to lysosomes for degradation. Ubiquitinated by ZNRF1; leading to degradation and modulation of the TLR4-mediated immune response.

It localises to the golgi apparatus membrane. Its subcellular location is the cell membrane. The protein resides in the membrane. It is found in the caveola. The protein localises to the membrane raft. Functionally, may act as a scaffolding protein within caveolar membranes. Forms a stable heterooligomeric complex with CAV2 that targets to lipid rafts and drives caveolae formation. Mediates the recruitment of CAVIN proteins (CAVIN1/2/3/4) to the caveolae. Interacts directly with G-protein alpha subunits and can functionally regulate their activity. Involved in the costimulatory signal essential for T-cell receptor (TCR)-mediated T-cell activation. Its binding to DPP4 induces T-cell proliferation and NF-kappa-B activation in a T-cell receptor/CD3-dependent manner. Recruits CTNNB1 to caveolar membranes and may regulate CTNNB1-mediated signaling through the Wnt pathway. Negatively regulates TGFB1-mediated activation of SMAD2/3 by mediating the internalization of TGFBR1 from membrane rafts leading to its subsequent degradation. Binds 20(S)-hydroxycholesterol (20(S)-OHC). This Rhinolophus ferrumequinum (Greater horseshoe bat) protein is Caveolin-1 (CAV1).